We begin with the raw amino-acid sequence, 706 residues long: MARHIMAVCVVCLLCAHRLHCQDHIESLLGPARVTTHNSQDQLNARVYTNLSPSSETTDRRQQRSASGDDDTFNYSISPPSRREKRHAGHEHGPTSESRVPQITQYYLEKLMAQDELMNSSGFDGLLQQLSLHSLASGASEGTCVPGSRLVHHVQPHDHHHAHHHEEEDHSLQLNNCTLIQNGTTSNVICPSLPNNNTHPLGKEAKNFTLSDKDLLHLCPILLYELKAQSGGCIEPAILSDIDTTEELLEAEKDKDIFYVWIYAFISVFACGILGLVGVAIIPFMGSRYYKYIIQYLVALAVGTMTGDALLHLLPHSLAGQDERGMIMKGLGCLGGIIFFYVMEHALTMISEWRKSVEKKETKKPSRAKVMRDPDSSVNNSVAGDKICKQKYSSYPYCYDEITMNNKQSEWMHLPFDVAAGAGGDAPSVAELRNGVGDHDGSNDMAAAAESLISPLHTNCVEMNHHNHNHKHNSHQQNHEGQDSNTIVTDLDGNAVYAVNKAKDKDSRNDHVTVILREHESSHHGHSHRHGHVHSPPETLSAVAWMIIMGDGLHNFTDGMAIGAAFAENIAGGFSTSLAVFCHELPHELGDFAILIKAGMSVKSAVYYNLLTGVLSFIGMIFGIAFGQSQDVAQWMFAVAAGLFIYIALVDMMPEISASHKSLGQFLLQILGMLSGVGIMLLIALYEGDLMSAFGTAGAASHQHAH.

Residues 1–21 (MARHIMAVCVVCLLCAHRLHC) form the signal peptide. The Extracellular portion of the chain corresponds to 22–261 (QDHIESLLGP…EKDKDIFYVW (240 aa)). Over residues 40–56 (QDQLNARVYTNLSPSSE) the composition is skewed to polar residues. The disordered stretch occupies residues 40 to 101 (QDQLNARVYT…HGPTSESRVP (62 aa)). N-linked (GlcNAc...) asparagine glycosylation is found at Asn74, Asn119, Asn176, Asn182, Asn196, and Asn207. Residues 262–282 (IYAFISVFACGILGLVGVAII) form a helical membrane-spanning segment. The Cytoplasmic segment spans residues 283–292 (PFMGSRYYKY). A helical transmembrane segment spans residues 293 to 313 (IIQYLVALAVGTMTGDALLHL). Over 314–329 (LPHSLAGQDERGMIMK) the chain is Extracellular. The helical transmembrane segment at 330 to 350 (GLGCLGGIIFFYVMEHALTMI) threads the bilayer. The Cytoplasmic portion of the chain corresponds to 351-604 (SEWRKSVEKK…LIKAGMSVKS (254 aa)). 3 positions are modified to phosphoserine: Ser376, Ser377, and Ser381. Residues 605 to 625 (AVYYNLLTGVLSFIGMIFGIA) form a helical membrane-spanning segment. The Extracellular portion of the chain corresponds to 626–631 (FGQSQD). The helical transmembrane segment at 632–652 (VAQWMFAVAAGLFIYIALVDM) threads the bilayer. Over 653 to 665 (MPEISASHKSLGQ) the chain is Cytoplasmic. Residues 666-686 (FLLQILGMLSGVGIMLLIALY) traverse the membrane as a helical segment. The Extracellular segment spans residues 687–706 (EGDLMSAFGTAGAASHQHAH).

Belongs to the ZIP transporter (TC 2.A.5) family. Post-translationally, glycosylated. Maternal foi has almost completely disappeared by embryonic stage 3 except in the pole cells. In stage 6 embryos, expression is enriched in the invaginating mesoderm. In stage 9 embryos, high levels in the anterior and posterior midgut primordia. In stage 14 embryos, broad expression with low levels in the epidermis.

The protein localises to the cell membrane. Required for the normal migration of longitudinal and peripheral glial cells. During larval development, required for the migration of the subretinal glia into the eye disk. During embryonic development, also controls the migration of muscle cells toward their attachment sites. Required in the mesoderm for the correct morphogenesis of embryonic gonad and for tracheal branch fusion during tracheal development. Shg may be cooperating with foi to mediate a common mechanism for gonad and tracheal morphogenesis. Acts as a zinc transporter in both yeast and mammalian cells. The protein is Zinc transporter foi of Drosophila melanogaster (Fruit fly).